The primary structure comprises 61 residues: UPF0434 protein Nmul_A1027 (61 aa).

The protein belongs to the UPF0434 family.

The protein is UPF0434 protein Nmul_A1027 of Nitrosospira multiformis (strain ATCC 25196 / NCIMB 11849 / C 71).